Reading from the N-terminus, the 590-residue chain is 2-isopropylmalate synthase (590 aa).

Residues 40–314 enclose the Pyruvate carboxyltransferase domain; sequence PRWCAVDLRD…DPQIDFSDID (275 aa). Mg(2+) contacts are provided by Asp-49, His-253, His-255, and Asn-289. Residues 456–590 form a regulatory domain region; the sequence is APETESDAKW…SSVPAELAGV (135 aa).

It belongs to the alpha-IPM synthase/homocitrate synthase family. LeuA type 2 subfamily. Homodimer. It depends on Mg(2+) as a cofactor.

It is found in the cytoplasm. It catalyses the reaction 3-methyl-2-oxobutanoate + acetyl-CoA + H2O = (2S)-2-isopropylmalate + CoA + H(+). It functions in the pathway amino-acid biosynthesis; L-leucine biosynthesis; L-leucine from 3-methyl-2-oxobutanoate: step 1/4. Catalyzes the condensation of the acetyl group of acetyl-CoA with 3-methyl-2-oxobutanoate (2-ketoisovalerate) to form 3-carboxy-3-hydroxy-4-methylpentanoate (2-isopropylmalate). In Leifsonia xyli subsp. xyli (strain CTCB07), this protein is 2-isopropylmalate synthase.